An 811-amino-acid polypeptide reads, in one-letter code: Lon protease 1 (811 aa).

The region spanning 15-212 is the Lon N-terminal domain; sequence LPVLSLRDTV…SLALHLYRQI (198 aa). 376-383 contributes to the ATP binding site; it reads GPPGTGKT. In terms of domain architecture, Lon proteolytic spans 613–794; the sequence is YDQPGVATGM…DEALARCLRL (182 aa). Active-site residues include serine 700 and lysine 743.

Belongs to the peptidase S16 family. As to quaternary structure, homohexamer. Organized in a ring with a central cavity.

It localises to the cytoplasm. It carries out the reaction Hydrolysis of proteins in presence of ATP.. Functionally, ATP-dependent serine protease that mediates the selective degradation of mutant and abnormal proteins as well as certain short-lived regulatory proteins. Required for cellular homeostasis and for survival from DNA damage and developmental changes induced by stress. Degrades polypeptides processively to yield small peptide fragments that are 5 to 10 amino acids long. Binds to DNA in a double-stranded, site-specific manner. In Sorangium cellulosum (strain So ce56) (Polyangium cellulosum (strain So ce56)), this protein is Lon protease 1.